We begin with the raw amino-acid sequence, 356 residues long: UDP-N-acetylglucosamine--N-acetylmuramyl-(pentapeptide) pyrophosphoryl-undecaprenol N-acetylglucosamine transferase (356 aa).

UDP-N-acetyl-alpha-D-glucosamine-binding positions include 15–17, Asn-127, Arg-163, Ser-191, Ile-244, 263–268, and Gln-288; these read TGG and ALTVSE.

Belongs to the glycosyltransferase 28 family. MurG subfamily.

Its subcellular location is the cell inner membrane. It carries out the reaction di-trans,octa-cis-undecaprenyl diphospho-N-acetyl-alpha-D-muramoyl-L-alanyl-D-glutamyl-meso-2,6-diaminopimeloyl-D-alanyl-D-alanine + UDP-N-acetyl-alpha-D-glucosamine = di-trans,octa-cis-undecaprenyl diphospho-[N-acetyl-alpha-D-glucosaminyl-(1-&gt;4)]-N-acetyl-alpha-D-muramoyl-L-alanyl-D-glutamyl-meso-2,6-diaminopimeloyl-D-alanyl-D-alanine + UDP + H(+). Its pathway is cell wall biogenesis; peptidoglycan biosynthesis. Cell wall formation. Catalyzes the transfer of a GlcNAc subunit on undecaprenyl-pyrophosphoryl-MurNAc-pentapeptide (lipid intermediate I) to form undecaprenyl-pyrophosphoryl-MurNAc-(pentapeptide)GlcNAc (lipid intermediate II). In Yersinia pestis bv. Antiqua (strain Antiqua), this protein is UDP-N-acetylglucosamine--N-acetylmuramyl-(pentapeptide) pyrophosphoryl-undecaprenol N-acetylglucosamine transferase.